Reading from the N-terminus, the 395-residue chain is Endophilin-B2 (395 aa).

An N-acetylmethionine modification is found at M1. Positions 1-27 (MDFNMKKLASDAGIFFTRAVQFTEEKF) are membrane-binding amphipathic helix. Residue S10 is modified to Phosphoserine. One can recognise a BAR domain in the interval 24–287 (EEKFGQAEKT…LGRFPGTFVG (264 aa)). 2 coiled-coil regions span residues 116–132 (IKVA…ERDF) and 206–240 (ASAL…LLLE). Positions 335-395 (SGTRKARVLY…VPVTYLELLS (61 aa)) constitute an SH3 domain. The residue at position 395 (S395) is a Phosphoserine.

This sequence belongs to the endophilin family. Homodimer, and heterodimer with SH3GLB1.

The protein localises to the cytoplasm. This Bos taurus (Bovine) protein is Endophilin-B2 (SH3GLB2).